A 200-amino-acid polypeptide reads, in one-letter code: Probable molybdenum cofactor guanylyltransferase (200 aa).

GTP-binding positions include 9 to 11 (LAG), lysine 21, aspartate 69, and aspartate 100. Position 100 (aspartate 100) interacts with Mg(2+).

Belongs to the MobA family. Requires Mg(2+) as cofactor.

The protein localises to the cytoplasm. It catalyses the reaction Mo-molybdopterin + GTP + H(+) = Mo-molybdopterin guanine dinucleotide + diphosphate. In terms of biological role, transfers a GMP moiety from GTP to Mo-molybdopterin (Mo-MPT) cofactor (Moco or molybdenum cofactor) to form Mo-molybdopterin guanine dinucleotide (Mo-MGD) cofactor. The chain is Probable molybdenum cofactor guanylyltransferase from Bacillus cereus (strain G9842).